A 513-amino-acid polypeptide reads, in one-letter code: ATP synthase subunit alpha 1 (513 aa).

Residue 169–176 coordinates ATP; sequence GDRQTGKT.

Belongs to the ATPase alpha/beta chains family. F-type ATPases have 2 components, CF(1) - the catalytic core - and CF(0) - the membrane proton channel. CF(1) has five subunits: alpha(3), beta(3), gamma(1), delta(1), epsilon(1). CF(0) has three main subunits: a(1), b(2) and c(9-12). The alpha and beta chains form an alternating ring which encloses part of the gamma chain. CF(1) is attached to CF(0) by a central stalk formed by the gamma and epsilon chains, while a peripheral stalk is formed by the delta and b chains.

It is found in the cell inner membrane. The catalysed reaction is ATP + H2O + 4 H(+)(in) = ADP + phosphate + 5 H(+)(out). In terms of biological role, produces ATP from ADP in the presence of a proton gradient across the membrane. The alpha chain is a regulatory subunit. The protein is ATP synthase subunit alpha 1 of Nitrosospira multiformis (strain ATCC 25196 / NCIMB 11849 / C 71).